The following is a 216-amino-acid chain: Large ribosomal subunit protein uL3 (216 aa).

Residues 132 to 155 (QDASHGNSRSHRVPGSIGQNQTPG) form a disordered region. Q152 is modified (N5-methylglutamine).

This sequence belongs to the universal ribosomal protein uL3 family. In terms of assembly, part of the 50S ribosomal subunit. Forms a cluster with proteins L14 and L19. In terms of processing, methylated by PrmB.

Functionally, one of the primary rRNA binding proteins, it binds directly near the 3'-end of the 23S rRNA, where it nucleates assembly of the 50S subunit. The chain is Large ribosomal subunit protein uL3 from Legionella pneumophila (strain Paris).